The chain runs to 257 residues: Phosphate import ATP-binding protein PstB (257 aa).

The region spanning 11-252 (IQVRDLNFYY…PAKKQTEDYI (242 aa)) is the ABC transporter domain. 43–50 (GPSGCGKS) provides a ligand contact to ATP.

This sequence belongs to the ABC transporter superfamily. Phosphate importer (TC 3.A.1.7) family. In terms of assembly, the complex is composed of two ATP-binding proteins (PstB), two transmembrane proteins (PstC and PstA) and a solute-binding protein (PstS).

Its subcellular location is the cell inner membrane. It catalyses the reaction phosphate(out) + ATP + H2O = ADP + 2 phosphate(in) + H(+). In terms of biological role, part of the ABC transporter complex PstSACB involved in phosphate import. Responsible for energy coupling to the transport system. This Salmonella paratyphi A (strain ATCC 9150 / SARB42) protein is Phosphate import ATP-binding protein PstB.